The chain runs to 190 residues: Superoxide dismutase [Fe] (190 aa).

4 residues coordinate Fe cation: H27, H75, D156, and H160.

It belongs to the iron/manganese superoxide dismutase family. As to quaternary structure, homodimer. The cofactor is Fe cation.

The catalysed reaction is 2 superoxide + 2 H(+) = H2O2 + O2. Destroys superoxide anion radicals which are normally produced within the cells and which are toxic to biological systems. This is Superoxide dismutase [Fe] (SODB) from Entamoeba histolytica (strain ATCC 30459 / HM-1:IMSS / ABRM).